Here is a 377-residue protein sequence, read N- to C-terminus: tRNA pseudouridine synthase B (377 aa).

Catalysis depends on Asp-53, which acts as the Nucleophile.

Belongs to the pseudouridine synthase TruB family. Type 1 subfamily.

The catalysed reaction is uridine(55) in tRNA = pseudouridine(55) in tRNA. Its function is as follows. Responsible for synthesis of pseudouridine from uracil-55 in the psi GC loop of transfer RNAs. This Tropheryma whipplei (strain Twist) (Whipple's bacillus) protein is tRNA pseudouridine synthase B.